The sequence spans 241 residues: Purine nucleoside phosphorylase DeoD-type (241 aa).

His5 is a binding site for a purine D-ribonucleoside. Residues Gly21, Arg25, Arg44, and Arg88–Ser91 each bind phosphate. A purine D-ribonucleoside-binding positions include Glu180–Glu182 and Ser204–Asp205. Catalysis depends on Asp205, which acts as the Proton donor.

This sequence belongs to the PNP/UDP phosphorylase family. As to quaternary structure, homohexamer; trimer of homodimers.

The catalysed reaction is a purine D-ribonucleoside + phosphate = a purine nucleobase + alpha-D-ribose 1-phosphate. It carries out the reaction a purine 2'-deoxy-D-ribonucleoside + phosphate = a purine nucleobase + 2-deoxy-alpha-D-ribose 1-phosphate. Its function is as follows. Catalyzes the reversible phosphorolytic breakdown of the N-glycosidic bond in the beta-(deoxy)ribonucleoside molecules, with the formation of the corresponding free purine bases and pentose-1-phosphate. The chain is Purine nucleoside phosphorylase DeoD-type from Yersinia enterocolitica serotype O:8 / biotype 1B (strain NCTC 13174 / 8081).